The primary structure comprises 180 residues: uncharacterized protein (180 aa).

Positions 17–80 (RRSRILHYLM…LIPNMGVRLT (64 aa)) constitute an HTH dtxR-type domain.

Belongs to the DtxR/MntR family.

This is an uncharacterized protein from Aeropyrum pernix (strain ATCC 700893 / DSM 11879 / JCM 9820 / NBRC 100138 / K1).